The following is a 125-amino-acid chain: uncharacterized protein (125 aa).

Residues Y100 to I120 form a helical membrane-spanning segment.

It localises to the membrane. This is an uncharacterized protein from Saccharomyces cerevisiae (strain ATCC 204508 / S288c) (Baker's yeast).